Consider the following 161-residue polypeptide: Large ribosomal subunit protein uL15 (161 aa).

The disordered stretch occupies residues 1 to 47; it reads MKLHELHDNPGANRKKKRVARGPGSGKGKTAGRGIKGQTSRSGVALN. Gly residues predominate over residues 23-35; it reads PGSGKGKTAGRGI.

This sequence belongs to the universal ribosomal protein uL15 family. Part of the 50S ribosomal subunit.

Functionally, binds to the 23S rRNA. This chain is Large ribosomal subunit protein uL15, found in Paracoccus denitrificans (strain Pd 1222).